Consider the following 303-residue polypeptide: MATKAAFARMNGLGNQIIVADMRGRADSITSAAAIRLASDSETAFDQIMAIHDPRTPGTDYYIAIINCDGTQAQACGNGTRCVVQALAAETGRHAFTFETRAGILTATEHDDGLISVDMGTPRFDWQDIPLAQAVADTRKIELQVGPADAPVLHSPSIASMGNPHAVFWVDKDVWSYELDKFGPLLENHPIFPERANISIAHVTSSDTIDLRTWERGAGLTRACGSAACAAAVSAARTGRTGRKVTVNVPGGPLLIEWRDDDHVMMTGPAEWEFSGTFDPATGEWSRDTQGLQGSGNADRGAA.

N15, Q47, and N67 together coordinate substrate. Residue C76 is the Proton donor of the active site. Residues 77–78 (GN), N163, N197, and 215–216 (ER) contribute to the substrate site. C224 (proton acceptor) is an active-site residue. 225–226 (GS) provides a ligand contact to substrate. The tract at residues 278–303 (FDPATGEWSRDTQGLQGSGNADRGAA) is disordered.

This sequence belongs to the diaminopimelate epimerase family. In terms of assembly, homodimer.

It localises to the cytoplasm. It catalyses the reaction (2S,6S)-2,6-diaminopimelate = meso-2,6-diaminopimelate. Its pathway is amino-acid biosynthesis; L-lysine biosynthesis via DAP pathway; DL-2,6-diaminopimelate from LL-2,6-diaminopimelate: step 1/1. Catalyzes the stereoinversion of LL-2,6-diaminopimelate (L,L-DAP) to meso-diaminopimelate (meso-DAP), a precursor of L-lysine and an essential component of the bacterial peptidoglycan. This chain is Diaminopimelate epimerase, found in Brucella abortus (strain S19).